Consider the following 806-residue polypeptide: Transitional endoplasmic reticulum ATPase (806 aa).

Position 3 is a phosphoserine (Ser3). ATP contacts are provided by residues 247–253, Asn348, His384, and 521–526; these read PGTGKTL and GCGKTL. Disordered stretches follow at residues 708 to 727 and 768 to 806; these read RRER…EDDP and FGSF…DLYG. Over residues 768 to 778 the composition is skewed to low complexity; it reads FGSFRFPSSNQ. The span at 779–794 shows a compositional bias: gly residues; sequence GGSGPSQGSSGGGGGN.

Belongs to the AAA ATPase family. In terms of assembly, homohexamer.

It is found in the cytoplasm. The protein resides in the cytosol. Its subcellular location is the endoplasmic reticulum. The protein localises to the nucleus. It catalyses the reaction ATP + H2O = ADP + phosphate + H(+). In terms of biological role, necessary for the fragmentation of Golgi stacks during mitosis and for their reassembly after mitosis. Involved in the formation of the nuclear envelope, and of the transitional endoplasmic reticulum (tER). The transfer of membranes from the endoplasmic reticulum to the Golgi apparatus occurs via 50-70 nm transition vesicles which derive from part-rough, part-smooth transitional elements of the endoplasmic reticulum (tER). Vesicle budding from the tER is an ATP-dependent process. Also involved in DNA damage response: recruited to double-strand breaks (DSBs) sites and promotes the recruitment of tp53bp1 at DNA damage sites. Together with sprtn metalloprotease, involved in the repair of covalent DNA-protein cross-links (DPCs) during DNA synthesis. Involved in interstrand cross-link repair in response to replication stress by mediating unloading of the ubiquitinated CMG helicase complex. Enhances cell cycle progression and inhibits apoptosis at low temperatures. Essential for the maturation of ubiquitin-containing autophagosomes and the clearance of ubiquitinated protein by autophagy. Acts as a negative regulator of type I interferon production by promoting ubiquitination of RIGI. May play a role in the ubiquitin-dependent sorting of membrane proteins to lysosomes where they undergo degradation. May more particularly play a role in caveolins sorting in cells. By controlling the steady-state expression of the IGF1R receptor, indirectly regulates the insulin-like growth factor receptor signaling pathway. The chain is Transitional endoplasmic reticulum ATPase from Danio rerio (Zebrafish).